Consider the following 389-residue polypeptide: Transcription factor MYB97 (389 aa).

HTH myb-type domains follow at residues 16–68 and 69–123; these read GVVL…ANHL and RPNL…KRFQ. 2 consecutive DNA-binding regions (H-T-H motif) follow at residues 44–68 and 96–119; these read WNSV…ANHL and WARM…NTRL. The disordered stretch occupies residues 131–159; it reads PPEYSQNNHQQQMYPQQPSSPLPSQTPAS. The span at 140-159 shows a compositional bias: low complexity; sequence QQQMYPQQPSSPLPSQTPAS.

Accumulates in pollen grains and pollen tube. Mostly expressed in mature pollen grains, and, to a lower extent, in inflorescences and siliques.

It is found in the nucleus. Transcription activator. Binds to 5'-CAACTGTC-3' and/or 5'-TAACAAA-3' motif in target gene promoter to promote their expression. Together with MYB101 and MYB120, functions as a male factor that controls pollen tube-synergid interaction in fertilization. Required for pollen tube growth arrest and sperm cell release in the female gametophyte, probably via the regulation of pollen tube-specific gene expression. The chain is Transcription factor MYB97 from Arabidopsis thaliana (Mouse-ear cress).